The chain runs to 292 residues: Ribosomal protein L11 methyltransferase (292 aa).

Residues Thr136, Gly159, Asp181, and Asn228 each coordinate S-adenosyl-L-methionine.

It belongs to the methyltransferase superfamily. PrmA family.

The protein resides in the cytoplasm. The catalysed reaction is L-lysyl-[protein] + 3 S-adenosyl-L-methionine = N(6),N(6),N(6)-trimethyl-L-lysyl-[protein] + 3 S-adenosyl-L-homocysteine + 3 H(+). Methylates ribosomal protein L11. The protein is Ribosomal protein L11 methyltransferase of Rhizobium etli (strain ATCC 51251 / DSM 11541 / JCM 21823 / NBRC 15573 / CFN 42).